We begin with the raw amino-acid sequence, 311 residues long: DNA-directed RNA polymerase subunit alpha (311 aa).

The alpha N-terminal domain (alpha-NTD) stretch occupies residues 1–227 (MAQFQIECIE…NLFCSLRNLD (227 aa)). Residues 239 to 311 (DKKISQVLIE…GISLPKEKSD (73 aa)) form an alpha C-terminal domain (alpha-CTD) region.

It belongs to the RNA polymerase alpha chain family. In plastids the minimal PEP RNA polymerase catalytic core is composed of four subunits: alpha, beta, beta', and beta''. When a (nuclear-encoded) sigma factor is associated with the core the holoenzyme is formed, which can initiate transcription.

The protein localises to the plastid. It is found in the chloroplast. It catalyses the reaction RNA(n) + a ribonucleoside 5'-triphosphate = RNA(n+1) + diphosphate. Its function is as follows. DNA-dependent RNA polymerase catalyzes the transcription of DNA into RNA using the four ribonucleoside triphosphates as substrates. The polypeptide is DNA-directed RNA polymerase subunit alpha (Pyropia yezoensis (Susabi-nori)).